The primary structure comprises 456 residues: Myricetin 3-O-rhamnosyltransferase UGT77B2 (456 aa).

The active-site Proton acceptor is His-19. His-19 contacts an anthocyanidin. Asp-116 serves as the catalytic Charge relay. An an anthocyanidin-binding site is contributed by His-147. The UDP-beta-L-rhamnose site is built by Thr-279, Ala-334, His-351, Asn-355, and Glu-359. An an anthocyanidin-binding site is contributed by Ala-374.

This sequence belongs to the UDP-glycosyltransferase family. As to expression, expressed in young cromes.

It carries out the reaction myricetin + UDP-beta-L-rhamnose = myricetin 3-O-alpha-L-rhamnoside + UDP + H(+). Its pathway is flavonoid metabolism. Rhamnosyltransferase involved in montbretin A (MbA) biosynthesis. Catalyzes the 3-O rhamnosylation of myricetin to produce myricetin 3-O-alpha-L-rhamnoside (MR), a precursor of MbA. MbA is a potent inhibitor of human pancreatic alpha-amylase and is being developed as drug candidate to treat type-2 diabetes. In vitro, is able to transfer UDP-glucose and UDP-xylose with 50-fold less efficiency compared with UDP-rhamnose. In vitro, can use kaempferol or quercetin as substrates, although these two flavonols may not be physiological substrates in vivo. The sequence is that of Myricetin 3-O-rhamnosyltransferase UGT77B2 from Crocosmia x crocosmiiflora (Montbretia).